Here is a 363-residue protein sequence, read N- to C-terminus: Phosphoserine aminotransferase (363 aa).

Residue R42 coordinates L-glutamate. Pyridoxal 5'-phosphate contacts are provided by residues 76-77, W101, T151, D170, and Q193; that span reads AS. The residue at position 194 (K194) is an N6-(pyridoxal phosphate)lysine. Position 234–235 (234–235) interacts with pyridoxal 5'-phosphate; the sequence is NT.

Belongs to the class-V pyridoxal-phosphate-dependent aminotransferase family. SerC subfamily. In terms of assembly, homodimer. Pyridoxal 5'-phosphate is required as a cofactor.

Its subcellular location is the cytoplasm. It catalyses the reaction O-phospho-L-serine + 2-oxoglutarate = 3-phosphooxypyruvate + L-glutamate. The enzyme catalyses 4-(phosphooxy)-L-threonine + 2-oxoglutarate = (R)-3-hydroxy-2-oxo-4-phosphooxybutanoate + L-glutamate. Its pathway is amino-acid biosynthesis; L-serine biosynthesis; L-serine from 3-phospho-D-glycerate: step 2/3. Catalyzes the reversible conversion of 3-phosphohydroxypyruvate to phosphoserine and of 3-hydroxy-2-oxo-4-phosphonooxybutanoate to phosphohydroxythreonine. The chain is Phosphoserine aminotransferase from Listeria innocua serovar 6a (strain ATCC BAA-680 / CLIP 11262).